Here is a 317-residue protein sequence, read N- to C-terminus: Peptidyl-prolyl cis-trans isomerase CYP26-2, chloroplastic (317 aa).

A disordered region spans residues 1 to 37 (MMQPNAKLLSPSAKFLPSPIEPPQHNRRTTVGAPPSL). In terms of domain architecture, PPIase cyclophilin-type spans 95-311 (FIDVSIDGEP…SKVVVTNCGL (217 aa)).

The protein belongs to the cyclophilin-type PPIase family. As to expression, ubiquitous. Lower levels of expression in roots.

The protein resides in the plastid. The protein localises to the chloroplast thylakoid. It carries out the reaction [protein]-peptidylproline (omega=180) = [protein]-peptidylproline (omega=0). PPIases accelerate the folding of proteins. It catalyzes the cis-trans isomerization of proline imidic peptide bonds in oligopeptides. The protein is Peptidyl-prolyl cis-trans isomerase CYP26-2, chloroplastic (CYP26-2) of Arabidopsis thaliana (Mouse-ear cress).